The sequence spans 142 residues: Transcription antitermination protein NusB (142 aa).

This sequence belongs to the NusB family.

Its function is as follows. Involved in transcription antitermination. Required for transcription of ribosomal RNA (rRNA) genes. Binds specifically to the boxA antiterminator sequence of the ribosomal RNA (rrn) operons. The sequence is that of Transcription antitermination protein NusB from Roseiflexus sp. (strain RS-1).